We begin with the raw amino-acid sequence, 339 residues long: MSSEMLPAFIETSNVDKKQGINEDQEESQKPRLGEGCEPISKRQMKKLIKQKQWEEQRELRKQKRKEKRKRKKLERQCQMEPNSDGHDRKRVRRDVVHSTLRLIIDCSFDHLMVLKDIKKLHKQIQRCYAENRRALHPVQFYLTSHGGQLKKNMDENDKGWVNWKDIHIKPEHYSELIKKEDLIYLTSDSPNILKELDESKAYVIGGLVDHNHHKGLTYKQASDYGINHAQLPLGNFVKMNSRKVLAVNHVFEIILEYLETRDWQEAFFTILPQRKGAVPTDKACESASHDNQSVRMEEGGSDSDSSEEEYSRNELDSPHEEKQDKENHTESTVNSLPH.

Disordered stretches follow at residues 1 to 90 (MSSE…HDRK) and 282 to 339 (DKAC…SLPH). Residues 14–35 (NVDKKQGINEDQEESQKPRLGE) show a composition bias toward basic and acidic residues. Residues 52 to 81 (KQWEEQRELRKQKRKEKRKRKKLERQCQME) are a coiled coil. Residues 61 to 74 (RKQKRKEKRKRKKL) show a composition bias toward basic residues. The region spanning 89–279 (RKRVRRDVVH…TILPQRKGAV (191 aa)) is the SAM-dependent MTase TRM10-type domain. Residues 300–309 (GGSDSDSSEE) are compositionally biased toward acidic residues. The segment covering 310 to 330 (EYSRNELDSPHEEKQDKENHT) has biased composition (basic and acidic residues). At S336 the chain carries Phosphoserine.

The protein belongs to the class IV-like SAM-binding methyltransferase superfamily. TRM10 family. In terms of assembly, interacts with tRNA. Expressed in embryonic and fetal brain. It is expressed throughout the dorsal telencephalon at 8 and 11 weeks of gestation, with highest expression in ventricular zone and marginal zone. Detected in cerebellar cortex and nuclei, but not in dorsal telencephalon, at later stages.

The protein resides in the nucleus. Its subcellular location is the nucleolus. The enzyme catalyses guanosine(9) in tRNA + S-adenosyl-L-methionine = N(1)-methylguanosine(9) in tRNA + S-adenosyl-L-homocysteine + H(+). In terms of biological role, S-adenosyl-L-methionine-dependent guanine N(1)-methyltransferase that catalyzes the formation of N(1)-methylguanine at position 9 (m1G9) in tRNAs. Probably not able to catalyze formation of N(1)-methyladenine at position 9 (m1A9) in tRNAs. This is tRNA methyltransferase 10 homolog A (TRMT10A) from Homo sapiens (Human).